The chain runs to 643 residues: MVKRNHKFKSGEGAMYYTRKAAMNKLQLNIKDFRQLCILKGIYPREPKHRARAQHGSREMKILYHKKDITFLLHEPIVWTLRDRKIFNRRIKHAAAKQNMNLRDIRLHNYPQLKLDHIVKERYPTFIDAIKELDDCMTLLFMFSTFPATKIITRELTRMSRRLTVEFMHYVIAAQALRKVFISIKGYYFQAEIKGETVTWIVPHYFPYSPHRGEMVDLSIMKSFGDFFTVMAGFINYRLYHSINLVYPPQFAHSLDSDETMGNEQKFVSERIAALNVELLRSDGGNGDTEEPELLEWTGNDEELPHVSQIRQEAQNVNKLKTLFKGLKFFLNREVPREPLVFIIRCFGGKVSWDKTMFVGATFDESDETITHQIVDRPSMEKQHISRDYIQPQWVFDSVNQRRLLPTNKYFMGAVLPPHLSPFTSANARYVPPEELAARKAAEGEEEEETFEPAEVNADHEHISDDEEVQDPENEQEMQDYALMKAFNDERTDSLNSGKKEGADDATDNGKDAAEKKQQQNGDGESDDEDEEEEDDDDGEEEEDVMPKKQKPVSNKPKGMAVRRGTVYRENEAEKKIVDKQEEALRARMVKSRHRKLYSKLVEREKKADKNARLLANKRERIEKQKRAEQMEKQKQQRKQILA.

The region spanning 319-412 is the BRCT domain; that stretch reads KLKTLFKGLK…RLLPTNKYFM (94 aa). Disordered stretches follow at residues 437 to 475, 492 to 571, and 609 to 643; these read AARK…PENE, TDSL…YREN, and DKNA…QILA. Over residues 464 to 475 the composition is skewed to acidic residues; sequence SDDEEVQDPENE. Over residues 492–518 the composition is skewed to basic and acidic residues; that stretch reads TDSLNSGKKEGADDATDNGKDAAEKKQ. Over residues 524–544 the composition is skewed to acidic residues; that stretch reads GESDDEDEEEEDDDDGEEEED. A coiled-coil region spans residues 569–643; sequence RENEAEKKIV…QKQQRKQILA (75 aa). Residues 609-635 show a composition bias toward basic and acidic residues; the sequence is DKNARLLANKRERIEKQKRAEQMEKQK.

It belongs to the pescadillo family.

It is found in the nucleus. It localises to the nucleolus. The protein resides in the nucleoplasm. Its function is as follows. Required for maturation of ribosomal RNAs and formation of the large ribosomal subunit. In Anopheles gambiae (African malaria mosquito), this protein is Pescadillo homolog.